Reading from the N-terminus, the 116-residue chain is UPF0102 protein LBJ_1427 (116 aa).

This sequence belongs to the UPF0102 family.

The polypeptide is UPF0102 protein LBJ_1427 (Leptospira borgpetersenii serovar Hardjo-bovis (strain JB197)).